Here is a 1002-residue protein sequence, read N- to C-terminus: Glutamate receptor ionotropic, NMDA 3B (1002 aa).

Residues 1–24 (MESVRTLWLSVALALAVGSRVVRG) form the signal peptide. Over 25 to 574 (HPQPCRVPTR…PIGAFMWPLH (550 aa)) the chain is Extracellular. N69, N212, N344, N451, and N465 each carry an N-linked (GlcNAc...) asparagine glycan. 2 disulfide bridges follow: C439-C475 and C445-C476. S531, S533, and R538 together coordinate glycine. The D-serine site is built by S533 and R538. Residues 575-594 (WSMWVGVFAALHLTALFLTL) traverse the membrane as a helical segment. Residues 595 to 615 (YEWRSPYGLTPRGRNRGTVFS) lie on the Cytoplasmic side of the membrane. Residues 616 to 627 (YSSALNLCYAIL) constitute an intramembrane region (discontinuously helical). Topologically, residues 628 to 641 (FGRTVSSKTPKCPT) are cytoplasmic. Residues 642-661 (GRFLMNLWAIFCLLVLSSYT) traverse the membrane as a helical segment. Residues 662–832 (ANLAAVMVGD…TLQMGVYHFS (171 aa)) lie on the Extracellular side of the membrane. Residue S701 participates in glycine binding. S701, A702, and D745 together coordinate D-serine. A glycine-binding site is contributed by D745. N786 carries an N-linked (GlcNAc...) asparagine glycan. A helical membrane pass occupies residues 833-848 (GLFVLLCLGLGSALLT). Topologically, residues 849-1002 (SLGEHVFYRL…RLLHAAPAES (154 aa)) are cytoplasmic. The tract at residues 882-910 (ALNTGPPEGQQERAEQERSGPKDELPATD) is disordered. Basic and acidic residues predominate over residues 891–906 (QQERAEQERSGPKDEL). Residues 944-985 (LCSNGPGLQAELRELELRIEAARERLRSALLRRGELRALLGD) adopt a coiled-coil conformation. Residues 951-984 (LQAELRELELRIEAARERLRSALLRRGELRALLG) form an involved in the trafficking and surface expression of NMDARs region.

The protein belongs to the glutamate-gated ion channel (TC 1.A.10.1) family. NR3B/GRIN3B subfamily. Forms heterotetrameric channels that contain at least two GluN1 subunits and at least a combination of one GluN2 and one GluN3 subunits (in vitro). Forms heterotetrameric channels composed of two GluN1/zeta subunits (GRIN1), and two identical GluN3 subunits (GRIN3A or GRIN3B) (in vitro). Does not form functional homomeric channels. As to expression, expressed in the hippocampus, the corpus callosum, in the facial and trigeminal nuclei of the brainstem and the ventral horn of the spinal cord.

The protein localises to the cell membrane. The protein resides in the postsynaptic cell membrane. It catalyses the reaction Ca(2+)(in) = Ca(2+)(out). It carries out the reaction Na(+)(in) = Na(+)(out). Excitatory glycine receptors are inhibited by D-serine at a concentrion of 100uM. Functionally, component of a non-conventional N-methyl-D-aspartate (NMDA) receptors (NMDARs) that function as heterotetrameric, ligand-gated cation channels with low calcium permeability and low voltage-dependent block by Mg(2+). Forms glutamatergic receptor complexes with GluN1 and GluN2 subunits which are activated by glycine binding to the GluN1 and GluN3 subunits and L-glutamate binding to GluN2 subunits. Forms excitatory glycinergic receptor complexes with GluN1 alone which are activated by glycine binding to the GluN1 and GluN3 subunits. GluN3B subunit also binds D-serine and, in the absence of glycine, activates glycinergic receptor complexes, but with lower efficacy than glycine. Each GluN3 subunit confers differential attributes to channel properties, including activation, deactivation and desensitization kinetics, pH sensitivity, Ca2(+) permeability, and binding to allosteric modulators. The protein is Glutamate receptor ionotropic, NMDA 3B of Rattus norvegicus (Rat).